The following is a 418-amino-acid chain: tRNA wybutosine-synthesizing protein 2 (418 aa).

S-adenosyl-L-methionine is bound by residues Ser-228, Lys-235, 275–276 (EI), and 302–303 (EN).

This sequence belongs to the class I-like SAM-binding methyltransferase superfamily. TRM5/TYW2 family.

The protein localises to the cytoplasm. Its subcellular location is the nucleus. It carries out the reaction 4-demethylwyosine(37) in tRNA(Phe) + S-adenosyl-L-methionine = 4-demethyl-7-[(3S)-3-amino-3-carboxypropyl]wyosine(37) in tRNA(Phe) + S-methyl-5'-thioadenosine + H(+). The protein operates within tRNA modification; wybutosine-tRNA(Phe) biosynthesis. Functionally, S-adenosyl-L-methionine-dependent transferase that acts as a component of the wybutosine biosynthesis pathway. Wybutosine is a hyper modified guanosine with a tricyclic base found at the 3'-position adjacent to the anticodon of eukaryotic phenylalanine tRNA. Catalyzes the transfer of the alpha-amino-alpha-carboxypropyl (acp) group from S-adenosyl-L-methionine to the C-7 position of 4-demethylwyosine (imG-14) to produce wybutosine-86. In Schizosaccharomyces pombe (strain 972 / ATCC 24843) (Fission yeast), this protein is tRNA wybutosine-synthesizing protein 2 (trm12).